A 222-amino-acid polypeptide reads, in one-letter code: UPF0758 protein Mpe_A2695 (222 aa).

The MPN domain maps to 100–222 (VFDSPQAVKD…VVSFAERGLL (123 aa)). 3 residues coordinate Zn(2+): H171, H173, and D184. A JAMM motif motif is present at residues 171-184 (HNHPSGVAEPSRAD).

Belongs to the UPF0758 family.

This is UPF0758 protein Mpe_A2695 from Methylibium petroleiphilum (strain ATCC BAA-1232 / LMG 22953 / PM1).